We begin with the raw amino-acid sequence, 392 residues long: Chaperone protein DnaJ 2 (392 aa).

The 66-residue stretch at 10 to 75 folds into the J domain; that stretch reads DFYKELGVSS…AKRKEYDETR (66 aa). The CR-type zinc-finger motif lies at 161-239; the sequence is GVAMPLRLTS…CKGTGVTTRT (79 aa). Positions 174, 177, 191, 194, 213, 216, 227, and 230 each coordinate Zn(2+). CXXCXGXG motif repeat units follow at residues 174-181, 191-198, 213-220, and 227-234; these read CTNCHGSG, CPTCNGSG, CTDCRGSG, and CDECKGTG.

This sequence belongs to the DnaJ family. In terms of assembly, homodimer. Zn(2+) serves as cofactor.

Its subcellular location is the cytoplasm. Functionally, participates actively in the response to hyperosmotic and heat shock by preventing the aggregation of stress-denatured proteins and by disaggregating proteins, also in an autonomous, DnaK-independent fashion. Unfolded proteins bind initially to DnaJ; upon interaction with the DnaJ-bound protein, DnaK hydrolyzes its bound ATP, resulting in the formation of a stable complex. GrpE releases ADP from DnaK; ATP binding to DnaK triggers the release of the substrate protein, thus completing the reaction cycle. Several rounds of ATP-dependent interactions between DnaJ, DnaK and GrpE are required for fully efficient folding. Also involved, together with DnaK and GrpE, in the DNA replication of plasmids through activation of initiation proteins. The chain is Chaperone protein DnaJ 2 from Mycolicibacterium paratuberculosis (strain ATCC BAA-968 / K-10) (Mycobacterium paratuberculosis).